A 169-amino-acid polypeptide reads, in one-letter code: MIAWSLVATLQCKMTGKSSFYTCRALMGLFEGGFVADLVLWMSYFYSSSELSIRLSFFWVTLSLTQIITSIVAFGVFHMRGIGGMAGWQWLFLIERIFTLVIGISAYFLMVPSVVQTKKPWSKKGWFTEREEKIIVNKILRDDPTKGDMNNRQGMSLKMLWQGITDYYI.

Helical transmembrane passes span 25–45 (ALMG…MSYF), 57–77 (FFWV…FGVF), and 91–111 (LFLI…FLMV).

This sequence belongs to the major facilitator superfamily. Allantoate permease family.

The protein resides in the membrane. This is an uncharacterized protein from Saccharomyces cerevisiae (strain ATCC 204508 / S288c) (Baker's yeast).